An 87-amino-acid chain; its full sequence is Mitochondrial import inner membrane translocase subunit TIM9 (87 aa).

At Met-1 the chain carries N-acetylmethionine. The Twin CX3C motif signature appears at 35–59 (CFTDCVNDFTTSKLTNKEQTCIMKC). 2 disulfides stabilise this stretch: Cys-35/Cys-59 and Cys-39/Cys-55.

It belongs to the small Tim family. In terms of assembly, heterohexamer; composed of 3 copies of TIM9 and 3 copies of TIM10, named soluble 70 kDa complex. Associates with the TIM12 component of the TIM22 complex, whose core is composed of TIM18, TIM22 and TIM54. Interacts with the transmembrane regions of multi-pass transmembrane proteins in transit.

The protein resides in the mitochondrion inner membrane. It localises to the mitochondrion intermembrane space. Mitochondrial intermembrane chaperone that participates in the import and insertion of multi-pass transmembrane proteins into the mitochondrial inner membrane. Also required for the transfer of beta-barrel precursors from the TOM complex to the sorting and assembly machinery (SAM complex) of the outer membrane. Acts as a chaperone-like protein that protects the hydrophobic precursors from aggregation and guide them through the mitochondrial intermembrane space. Compared to TIM10, it may have a strong structural role. The sequence is that of Mitochondrial import inner membrane translocase subunit TIM9 (TIM9) from Saccharomyces cerevisiae (strain ATCC 204508 / S288c) (Baker's yeast).